A 380-amino-acid chain; its full sequence is MARPWTFGIEEEYLLADTTSGQVLASPSPAVTRRCREMLGATFAEEMFLSQIEVVSPVFDSLHQARSFLGENRQRLGEALGDFGVGLYGAASHPCAQWLRQHPRGTAHFRQLFDDYRLVARRSLVNGLHVHVGVPAGTDRMQLINRVLYWLPLFLVLSTSSPLWGGQDTGYMSYRRVICGEWPHMGLPEPLADWHAYQRYRGLLQRTGALAEDGDFWWAIRPSRRFPTVELRICDGCPRLEDGLAIAGLYRHLVQHALARHDGMAVSREIRWITQENYWRAARYGRRGTFIGAVDQQPVSAEGWLAQLQSWLPADSAEAERSFMQARRILREGTSADRQREAYALARENGLAGREALRAVARQVMAEHFPGAGLPQGEIE.

This sequence belongs to the glutamate--cysteine ligase type 2 family. YbdK subfamily.

The enzyme catalyses L-cysteine + L-glutamate + ATP = gamma-L-glutamyl-L-cysteine + ADP + phosphate + H(+). ATP-dependent carboxylate-amine ligase which exhibits weak glutamate--cysteine ligase activity. This chain is Putative glutamate--cysteine ligase 2, found in Pseudomonas entomophila (strain L48).